Here is a 235-residue protein sequence, read N- to C-terminus: Phosphoribosylaminoimidazole-succinocarboxamide synthase (235 aa).

The protein belongs to the SAICAR synthetase family.

The catalysed reaction is 5-amino-1-(5-phospho-D-ribosyl)imidazole-4-carboxylate + L-aspartate + ATP = (2S)-2-[5-amino-1-(5-phospho-beta-D-ribosyl)imidazole-4-carboxamido]succinate + ADP + phosphate + 2 H(+). Its pathway is purine metabolism; IMP biosynthesis via de novo pathway; 5-amino-1-(5-phospho-D-ribosyl)imidazole-4-carboxamide from 5-amino-1-(5-phospho-D-ribosyl)imidazole-4-carboxylate: step 1/2. This chain is Phosphoribosylaminoimidazole-succinocarboxamide synthase, found in Clostridium kluyveri (strain NBRC 12016).